We begin with the raw amino-acid sequence, 329 residues long: Cytosolic arginine sensor for mTORC1 subunit 2 (329 aa).

2 ACT domains span residues Ala72–Ser140 and Glu262–Lys322.

It belongs to the GATS family. As to quaternary structure, forms homodimers and heterodimers with CASTOR1. Interacts with the GATOR2 complex which is composed of MIOS, SEC13, SEH1L, WDR24 and WDR59; the interaction is not regulated by arginine.

The protein resides in the cytoplasm. Its subcellular location is the cytosol. Functions as a negative regulator of the TORC1 signaling pathway through the GATOR complex. As part of homodimers or heterodimers with CASTOR1, directly binds and inhibits the GATOR subcomplex GATOR2 and thereby mTORC1. Does not directly bind arginine, but binding of arginine to CASTOR1 disrupts the interaction of CASTOR2-containing heterodimers with GATOR2 which can in turn activate mTORC1 and the TORC1 signaling pathway. The polypeptide is Cytosolic arginine sensor for mTORC1 subunit 2 (Mus musculus (Mouse)).